A 382-amino-acid polypeptide reads, in one-letter code: Mannitol-1-phosphate 5-dehydrogenase (382 aa).

Residue 4-15 (AVHFGAGNIGRG) coordinates NAD(+).

Belongs to the mannitol dehydrogenase family.

The enzyme catalyses D-mannitol 1-phosphate + NAD(+) = beta-D-fructose 6-phosphate + NADH + H(+). The sequence is that of Mannitol-1-phosphate 5-dehydrogenase from Vibrio parahaemolyticus serotype O3:K6 (strain RIMD 2210633).